A 931-amino-acid chain; its full sequence is Histone-lysine N-methyltransferase EZ1 (931 aa).

A compositionally biased stretch (low complexity) spans 1-30; sequence MEAEAAAAVVASSASASASAGRSRPSSSAA. Disordered regions lie at residues 1 to 37, 372 to 450, and 491 to 549; these read MEAE…SNSA, PTHS…ITNR, and RNGN…YDSS. Over residues 375–385 the composition is skewed to polar residues; that stretch reads SSDNVMNQPGS. The span at 386 to 398 shows a compositional bias: basic residues; sequence NRKKNGSSGRKTK. Positions 423 to 433 are enriched in polar residues; that stretch reads SNKSPQHSPSP. Low complexity predominate over residues 500-509; the sequence is SSQQSSPSTR. Residues 528–549 are compositionally biased toward basic and acidic residues; the sequence is AHNDSTEEANNRHSATDGYDSS. Residues 565 to 615 form the SANT domain; the sequence is YLRSWKAIEQGLLVKGLEIFGRNSCLIARNLLGGMKTCKDVFQYMNYIENN. In terms of domain architecture, CXC spans 664–763; sequence FKRITERKDQ…TLGVPNQRGD (100 aa). One can recognise an SET domain in the interval 778–893; sequence QRVLLGRSDV…AGEELFYDYR (116 aa). Positions 903–915 are enriched in basic and acidic residues; that stretch reads ARKPEASGAKDDG. Positions 903 to 931 are disordered; sequence ARKPEASGAKDDGQPFNGRAKKLAQNNRG.

This sequence belongs to the class V-like SAM-binding methyltransferase superfamily. Histone-lysine methyltransferase family. EZ subfamily. As to expression, widely expressed.

The protein localises to the nucleus. The enzyme catalyses L-lysyl(27)-[histone H3] + 3 S-adenosyl-L-methionine = N(6),N(6),N(6)-trimethyl-L-lysyl(27)-[histone H3] + 3 S-adenosyl-L-homocysteine + 3 H(+). Polycomb group (PcG) protein. Catalytic subunit of some PcG multiprotein complex, which methylates 'Lys-27' of histone H3, leading to transcriptional repression of the affected target genes. PcG proteins are not required to initiate repression, but to maintain it during later stages of development. The sequence is that of Histone-lysine N-methyltransferase EZ1 (EZ1) from Zea mays (Maize).